Reading from the N-terminus, the 121-residue chain is Putative iron-sulfur cluster insertion protein ErpA (121 aa).

3 residues coordinate iron-sulfur cluster: Cys49, Cys113, and Cys115.

The protein belongs to the HesB/IscA family. Homodimer. Iron-sulfur cluster serves as cofactor.

In terms of biological role, required for insertion of 4Fe-4S clusters. The chain is Putative iron-sulfur cluster insertion protein ErpA from Verminephrobacter eiseniae (strain EF01-2).